A 58-amino-acid chain; its full sequence is uncharacterized protein (58 aa).

This is an uncharacterized protein from Saccharomyces cerevisiae (strain ATCC 204508 / S288c) (Baker's yeast).